A 326-amino-acid chain; its full sequence is MNMEEIVALSVKHNVSDLHLCSAWPARWRIRGRMEAAPFDTPDVEELLREWLDDDQRAILLENGQLDFAVSLAENQRLRGSAFAQRHGISLALRLLPSHCPQLEQLGAPTVLPELLKSENGLILVTGATGSGKSTTLAAMVGYLNQHADAHILTLEDPVEYLYASQRCLIQQREIGLHCMTFASGLRAALREDPDVILLGELRDSETIRLALTAAETGHLVLATLHTRGAAQAVERLVDSFPAQEKDPVRNQLAGSLRAVLSQKLEVDKQEGRVALFELLINTPAVGNLIREGKTHQLPHVIQTGQQVGMITFQQSYQHRVGEGRL.

127 to 134 (GATGSGKS) is an ATP binding site.

This sequence belongs to the GSP E family.

This is an uncharacterized protein from Escherichia coli (strain K12).